The primary structure comprises 518 residues: Integrator complex subunit 14 (518 aa).

Residues 2–204 (PTVVVMDVSL…KNVQSMFGKL (203 aa)) form the VWFA domain. 3 residues coordinate Mg(2+): S10, S12, and T86. K418 carries the N6-acetyllysine modification.

It belongs to the Integrator subunit 14 family. In terms of assembly, component of the Integrator complex, composed of core subunits INTS1, INTS2, INTS3, INTS4, INTS5, INTS6, INTS7, INTS8, INTS9/RC74, INTS10, INTS11/CPSF3L, INTS12, INTS13, INTS14 and INTS15. The core complex associates with protein phosphatase 2A subunits PPP2CA and PPP2R1A, to form the Integrator-PP2A (INTAC) complex. INTS14 is part of the tail subcomplex, composed of INTS10, INTS13, INTS14 and INTS15. In terms of tissue distribution, strongly expressed in numerous cancer cells compared with their non-cancerous counterparts (lung, prostate, colon, stomach and skin).

The protein localises to the nucleus. Component of the integrator complex, a multiprotein complex that terminates RNA polymerase II (Pol II) transcription in the promoter-proximal region of genes. The integrator complex provides a quality checkpoint during transcription elongation by driving premature transcription termination of transcripts that are unfavorably configured for transcriptional elongation: the complex terminates transcription by (1) catalyzing dephosphorylation of the C-terminal domain (CTD) of Pol II subunit POLR2A/RPB1 and SUPT5H/SPT5, (2) degrading the exiting nascent RNA transcript via endonuclease activity and (3) promoting the release of Pol II from bound DNA. The integrator complex is also involved in terminating the synthesis of non-coding Pol II transcripts, such as enhancer RNAs (eRNAs), small nuclear RNAs (snRNAs), telomerase RNAs and long non-coding RNAs (lncRNAs). Within the integrator complex, INTS14 is part of the integrator tail module that acts as a platform for the recruitment of transcription factors at promoters. In Homo sapiens (Human), this protein is Integrator complex subunit 14.